We begin with the raw amino-acid sequence, 86 residues long: Exodeoxyribonuclease 7 small subunit (86 aa).

The interval 67-86 (RVSPASGGATEAPAPAERDR) is disordered.

The protein belongs to the XseB family. As to quaternary structure, heterooligomer composed of large and small subunits.

Its subcellular location is the cytoplasm. The catalysed reaction is Exonucleolytic cleavage in either 5'- to 3'- or 3'- to 5'-direction to yield nucleoside 5'-phosphates.. Functionally, bidirectionally degrades single-stranded DNA into large acid-insoluble oligonucleotides, which are then degraded further into small acid-soluble oligonucleotides. The protein is Exodeoxyribonuclease 7 small subunit of Beutenbergia cavernae (strain ATCC BAA-8 / DSM 12333 / CCUG 43141 / JCM 11478 / NBRC 16432 / NCIMB 13614 / HKI 0122).